Consider the following 400-residue polypeptide: Argininosuccinate synthase (400 aa).

8-16 (AYSGGLDTS) lines the ATP pocket. Residue Tyr87 participates in L-citrulline binding. Residue Gly117 participates in ATP binding. Positions 119, 123, and 124 each coordinate L-aspartate. Asn123 contributes to the L-citrulline binding site. 4 residues coordinate L-citrulline: Arg127, Ser175, Glu260, and Tyr272.

This sequence belongs to the argininosuccinate synthase family. Type 1 subfamily. As to quaternary structure, homotetramer.

It localises to the cytoplasm. It carries out the reaction L-citrulline + L-aspartate + ATP = 2-(N(omega)-L-arginino)succinate + AMP + diphosphate + H(+). The protein operates within amino-acid biosynthesis; L-arginine biosynthesis; L-arginine from L-ornithine and carbamoyl phosphate: step 2/3. The protein is Argininosuccinate synthase of Mycobacterium sp. (strain JLS).